The primary structure comprises 263 residues: Type III pantothenate kinase (263 aa).

9–16 (DIGNTSIK) is an ATP binding site. Residues tyrosine 103 and 110–113 (GADR) contribute to the substrate site. The Proton acceptor role is filled by aspartate 112. K(+) is bound at residue aspartate 134. An ATP-binding site is contributed by threonine 137. Threonine 190 contacts substrate.

Belongs to the type III pantothenate kinase family. Homodimer. It depends on NH4(+) as a cofactor. K(+) is required as a cofactor.

The protein resides in the cytoplasm. The enzyme catalyses (R)-pantothenate + ATP = (R)-4'-phosphopantothenate + ADP + H(+). Its pathway is cofactor biosynthesis; coenzyme A biosynthesis; CoA from (R)-pantothenate: step 1/5. Catalyzes the phosphorylation of pantothenate (Pan), the first step in CoA biosynthesis. This chain is Type III pantothenate kinase, found in Desulfovibrio desulfuricans (strain ATCC 27774 / DSM 6949 / MB).